Consider the following 201-residue polypeptide: IMP cyclohydrolase (201 aa).

This sequence belongs to the archaeal IMP cyclohydrolase family.

It catalyses the reaction IMP + H2O = 5-formamido-1-(5-phospho-D-ribosyl)imidazole-4-carboxamide. The protein operates within purine metabolism; IMP biosynthesis via de novo pathway; IMP from 5-formamido-1-(5-phospho-D-ribosyl)imidazole-4-carboxamide: step 1/1. Catalyzes the cyclization of 5-formylamidoimidazole-4-carboxamide ribonucleotide to IMP. This Methanococcus maripaludis (strain C5 / ATCC BAA-1333) protein is IMP cyclohydrolase.